A 256-amino-acid chain; its full sequence is Small ribosomal subunit protein uS2 (256 aa).

It belongs to the universal ribosomal protein uS2 family.

This chain is Small ribosomal subunit protein uS2, found in Streptococcus agalactiae serotype III (strain NEM316).